The following is a 332-amino-acid chain: Probable allantoicase (332 aa).

The protein belongs to the allantoicase family.

It carries out the reaction allantoate + H2O = (S)-ureidoglycolate + urea. The protein operates within nitrogen metabolism; (S)-allantoin degradation; (S)-ureidoglycolate from allantoate (aminidohydrolase route): step 1/1. This chain is Probable allantoicase, found in Pseudomonas paraeruginosa (strain DSM 24068 / PA7) (Pseudomonas aeruginosa (strain PA7)).